Reading from the N-terminus, the 362-residue chain is tRNA/tmRNA (uracil-C(5))-methyltransferase (362 aa).

5 residues coordinate S-adenosyl-L-methionine: Q182, Y210, N215, E231, and D293. C318 serves as the catalytic Nucleophile. The active-site Proton acceptor is the E352.

Belongs to the class I-like SAM-binding methyltransferase superfamily. RNA M5U methyltransferase family. TrmA subfamily.

It catalyses the reaction uridine(54) in tRNA + S-adenosyl-L-methionine = 5-methyluridine(54) in tRNA + S-adenosyl-L-homocysteine + H(+). The enzyme catalyses uridine(341) in tmRNA + S-adenosyl-L-methionine = 5-methyluridine(341) in tmRNA + S-adenosyl-L-homocysteine + H(+). Functionally, dual-specificity methyltransferase that catalyzes the formation of 5-methyluridine at position 54 (m5U54) in all tRNAs, and that of position 341 (m5U341) in tmRNA (transfer-mRNA). The sequence is that of tRNA/tmRNA (uracil-C(5))-methyltransferase from Neisseria meningitidis serogroup B (strain ATCC BAA-335 / MC58).